The primary structure comprises 450 residues: Cysteine proteinase (450 aa).

The N-terminal stretch at 1–20 is a signal peptide; the sequence is MPRTEMVRFVRLPVVLLAMA. Residues 21-125 constitute a propeptide, activation peptide; it reads ACLASVALGS…RKTVNVTTGR (105 aa). N-linked (GlcNAc...) asparagine glycosylation is present at N120. C147 and C188 are oxidised to a cystine. Catalysis depends on residues C150, H287, and N307. Residues 343-450 are 108-residue extension; the sequence is TPPPPPPPPP…TKAARLVPHQ (108 aa). The N-linked (GlcNAc...) asparagine glycan is linked to N397.

The protein belongs to the peptidase C1 family.

It is found in the lysosome. The cysteine proteinases have a potential role in host-parasite interaction and virulence. In Trypanosoma brucei brucei, this protein is Cysteine proteinase.